The sequence spans 453 residues: Tubulin beta-2 chain (453 aa).

Residues Q11, E71, S140, G144, T145, G146, N206, and N228 each coordinate GTP. E71 lines the Mg(2+) pocket.

It belongs to the tubulin family. As to quaternary structure, dimer of alpha and beta chains. A typical microtubule is a hollow water-filled tube with an outer diameter of 25 nm and an inner diameter of 15 nM. Alpha-beta heterodimers associate head-to-tail to form protofilaments running lengthwise along the microtubule wall with the beta-tubulin subunit facing the microtubule plus end conferring a structural polarity. Microtubules usually have 13 protofilaments but different protofilament numbers can be found in some organisms and specialized cells. Mg(2+) is required as a cofactor.

The protein localises to the cytoplasm. It localises to the cytoskeleton. In terms of biological role, tubulin is the major constituent of microtubules, a cylinder consisting of laterally associated linear protofilaments composed of alpha- and beta-tubulin heterodimers. Microtubules grow by the addition of GTP-tubulin dimers to the microtubule end, where a stabilizing cap forms. Below the cap, tubulin dimers are in GDP-bound state, owing to GTPase activity of alpha-tubulin. This Geotrichum candidum (Oospora lactis) protein is Tubulin beta-2 chain.